The sequence spans 304 residues: Probable 5-dehydro-4-deoxyglucarate dehydratase (304 aa).

The protein belongs to the DapA family.

It carries out the reaction 5-dehydro-4-deoxy-D-glucarate + H(+) = 2,5-dioxopentanoate + CO2 + H2O. It participates in carbohydrate acid metabolism; D-glucarate degradation; 2,5-dioxopentanoate from D-glucarate: step 2/2. This Arthrobacter sp. (strain FB24) protein is Probable 5-dehydro-4-deoxyglucarate dehydratase.